A 330-amino-acid polypeptide reads, in one-letter code: MAFLEDGNHTIVTEFILLGLTDDPVLRDILFTIILCIYLVTVSGNLSTILLIRVSSQLHHPMYFFLSHLASVDIGISSSVTPNMLANFLVKPNTISYIGCSIQFTSAVFLATVECFLLAAMAYDRFVAICNPLLYSTKMSREACIQLVVGSYIQGLLNASFFTLSFFSLIFCGPNRINHFYCDLAPLVELSCSDVTLAVVITSISAGFITLTTVFVIAISYSCIFITIMKMHSTESRYKAFSTCTSHLTAVTLFYGTTMFIYVMPKSSYSTDQNKVLSVFYMVVIPMLNPLIYSLRNNEIKGALKRYLGKKIFSYGNLFCKTHYNDTHQV.

Residues 1 to 28 (MAFLEDGNHTIVTEFILLGLTDDPVLRD) lie on the Extracellular side of the membrane. Asn8 is a glycosylation site (N-linked (GlcNAc...) asparagine). Residues 29–49 (ILFTIILCIYLVTVSGNLSTI) traverse the membrane as a helical segment. The Cytoplasmic portion of the chain corresponds to 50 to 57 (LLIRVSSQ). Residues 58–78 (LHHPMYFFLSHLASVDIGISS) traverse the membrane as a helical segment. Residues 79–102 (SVTPNMLANFLVKPNTISYIGCSI) are Extracellular-facing. Cys100 and Cys192 are oxidised to a cystine. Residues 103-123 (QFTSAVFLATVECFLLAAMAY) form a helical membrane-spanning segment. At 124–136 (DRFVAICNPLLYS) the chain is on the cytoplasmic side. Residues 137 to 157 (TKMSREACIQLVVGSYIQGLL) form a helical membrane-spanning segment. Residues 158 to 199 (NASFFTLSFFSLIFCGPNRINHFYCDLAPLVELSCSDVTLAV) are Extracellular-facing. Residues 200 to 220 (VITSISAGFITLTTVFVIAIS) traverse the membrane as a helical segment. Topologically, residues 221–240 (YSCIFITIMKMHSTESRYKA) are cytoplasmic. Residues 241-261 (FSTCTSHLTAVTLFYGTTMFI) form a helical membrane-spanning segment. At 262–274 (YVMPKSSYSTDQN) the chain is on the extracellular side. A helical membrane pass occupies residues 275–295 (KVLSVFYMVVIPMLNPLIYSL). Topologically, residues 296–330 (RNNEIKGALKRYLGKKIFSYGNLFCKTHYNDTHQV) are cytoplasmic.

The protein belongs to the G-protein coupled receptor 1 family.

The protein resides in the cell membrane. In terms of biological role, potential odorant receptor. In Mus musculus (Mouse), this protein is Olfactory receptor 5P70.